Here is a 631-residue protein sequence, read N- to C-terminus: Chaperone protein DnaK (631 aa).

T197 carries the post-translational modification Phosphothreonine; by autocatalysis. The interval 600-631 (KKENPQAADAQQGNTANAGKKKDDDVIDAEVE) is disordered.

It belongs to the heat shock protein 70 family.

Its function is as follows. Acts as a chaperone. This is Chaperone protein DnaK from Wolinella succinogenes (strain ATCC 29543 / DSM 1740 / CCUG 13145 / JCM 31913 / LMG 7466 / NCTC 11488 / FDC 602W) (Vibrio succinogenes).